A 272-amino-acid polypeptide reads, in one-letter code: Proteasome subunit beta type-5 (272 aa).

Positions 1 to 62 (MINIDFDNIE…APKALEFAHG (62 aa)) are cleaved as a propeptide — removed in mature form. Residue Thr-63 is the Nucleophile of the active site.

It belongs to the peptidase T1B family. In terms of assembly, the 26S proteasome consists of a 20S proteasome core and two 19S regulatory subunits. The 20S proteasome core is composed of 28 subunits that are arranged in four stacked rings, resulting in a barrel-shaped structure. The two end rings are each formed by seven alpha subunits, and the two central rings are each formed by seven beta subunits. The catalytic chamber with the active sites is on the inside of the barrel.

It localises to the cytoplasm. The protein localises to the nucleus. The enzyme catalyses Cleavage of peptide bonds with very broad specificity.. Functionally, the proteasome is a multicatalytic proteinase complex which is characterized by its ability to cleave peptides with Arg, Phe, Tyr, Leu, and Glu adjacent to the leaving group at neutral or slightly basic pH. The proteasome has an ATP-dependent proteolytic activity. The sequence is that of Proteasome subunit beta type-5 (psmB5) from Dictyostelium discoideum (Social amoeba).